Reading from the N-terminus, the 327-residue chain is MENGIKESPVGLNKNGALAILPTPLVSEGHKNHKSVLNSLTSGALAGAVAKTAVAPLDRTKIIFQVSSNRFSAKEAYRLIYRTYMNDGFLSLWRGNSATMVRVIPYAAIQFCAHEQYKKLLGSYYGFQGSALTPIPRLLAGALAGTTATLLTYPLDLVRARMAVTQKEMYSNIIHVFMRMSREEGLKSLYRGFTPTVLGVIPYAGISFFTYETLKKLHAEHSGRTQPYTFERLLFGACAGLFGQSSSYPLDVVRRRMQTAGVTGHTYGSIIGTMQEIVAEEGFIRGLYKGLSMNWVKGPVAVGISFTTFDLTQILLKKLQQISHIQR.

3 Solcar repeats span residues 34-120 (KSVL…YKKL), 132-217 (LTPI…LKKL), and 227-315 (PYTF…TQIL). The next 6 membrane-spanning stretches (helical) occupy residues 36–56 (VLNSLTSGALAGAVAKTAVAP), 92–112 (LWRGNSATMVRVIPYAAIQFC), 138–158 (LLAGALAGTTATLLTYPLDLV), 192–209 (GFTPTVLGVIPYAGISFF), 233–253 (LLFGACAGLFGQSSSYPLDVV), and 296–316 (VKGPVAVGISFTTFDLTQILL).

This sequence belongs to the mitochondrial carrier (TC 2.A.29) family.

It is found in the mitochondrion inner membrane. The catalysed reaction is ADP(out) + CoA(in) = ADP(in) + CoA(out). It carries out the reaction 3'-dephospho-CoA(in) + ADP(out) = 3'-dephospho-CoA(out) + ADP(in). The enzyme catalyses adenosine 3',5'-bisphosphate(in) + ADP(out) = adenosine 3',5'-bisphosphate(out) + ADP(in). It catalyses the reaction AMP(in) + ADP(out) = AMP(out) + ADP(in). The catalysed reaction is dADP(in) + ADP(out) = dADP(out) + ADP(in). It carries out the reaction ADP(in) + ATP(out) = ADP(out) + ATP(in). Mitochondrial carrier mediating the transport of coenzyme A (CoA) in mitochondria in exchange for intramitochondrial (deoxy)adenine nucleotides and adenosine 3',5'-diphosphate. The protein is Mitochondrial coenzyme A transporter SLC25A42 (slc25a42) of Xenopus laevis (African clawed frog).